A 376-amino-acid polypeptide reads, in one-letter code: 1-acyl-sn-glycerol-3-phosphate acyltransferase gamma (376 aa).

The Cytoplasmic segment spans residues 1-124; sequence MGLLAYLKTQ…LGSSKVLAKR (124 aa). The HXXXXD motif signature appears at 96–101; the sequence is HNFEID. Residues 125 to 145 form a helical membrane-spanning segment; sequence ELLCVPLIGWTWYFLEIVFCK. At 146–316 the chain is on the lumenal side; sequence RKWEEDRDTV…TLLNFLCWAT (171 aa). Residues 317-339 form a helical membrane-spanning segment; the sequence is ILLSPLFSFVLGVFASGSPLLIL. Residues 340 to 376 lie on the Cytoplasmic side of the membrane; sequence TFLGFVGAASFGVRRLIGVTEIEKGSSYGNQELKKKE.

The protein belongs to the 1-acyl-sn-glycerol-3-phosphate acyltransferase family. In terms of tissue distribution, widely expressed. Mainly expressed in testis, kidney and liver (at protein level).

The protein resides in the endoplasmic reticulum membrane. The protein localises to the nucleus envelope. It catalyses the reaction a 1-acyl-sn-glycero-3-phosphate + an acyl-CoA = a 1,2-diacyl-sn-glycero-3-phosphate + CoA. It carries out the reaction pentadecanoyl-CoA + 1-(9Z-octadecenoyl)-sn-glycero-3-phosphate = 1-(9Z)-octadecenoyl-2-pentadecanoyl-sn-glycero-3-phosphate + CoA. The catalysed reaction is heptadecanoyl-CoA + 1-(9Z-octadecenoyl)-sn-glycero-3-phosphate = 1-(9Z)-octadecenoyl-2-heptadecanoyl-sn-glycero-3-phosphate + CoA. The enzyme catalyses 1-(9Z-octadecenoyl)-sn-glycero-3-phosphate + octadecanoyl-CoA = 1-(9Z-octadecenoyl)-2-octadecanoyl-sn-glycero-3-phosphate + CoA. It catalyses the reaction nonadecanoyl-CoA + 1-(9Z-octadecenoyl)-sn-glycero-3-phosphate = 1-(9Z)-octadecenoyl-2-nonadecanoyl-sn-glycero-3-phosphate + CoA. It carries out the reaction 1-(9Z-octadecenoyl)-sn-glycero-3-phosphate + (5Z,8Z,11Z,14Z)-eicosatetraenoyl-CoA = 1-(9Z)-octadecenoyl-2-(5Z,8Z,11Z,14Z)-eicosatetraenoyl-sn-glycero-3-phosphate + CoA. The catalysed reaction is 1-(9Z-octadecenoyl)-sn-glycero-3-phosphate + (9Z)-octadecenoyl-CoA = 1,2-di-(9Z-octadecenoyl)-sn-glycero-3-phosphate + CoA. The enzyme catalyses 1-(9Z-octadecenoyl)-sn-glycero-3-phosphate + (9Z,12Z)-octadecadienoyl-CoA = 1-(9Z)-octadecenoyl-2-(9Z,12Z)-octadecadienoyl-sn-glycero-3-phosphate + CoA. It catalyses the reaction 1-(9Z-octadecenoyl)-sn-glycero-3-phosphocholine + (5Z,8Z,11Z,14Z)-eicosatetraenoyl-CoA = 1-(9Z)-octadecenoyl-2-(5Z,8Z,11Z,14Z)-icosatetraenoyl-sn-glycero-3-phosphocholine + CoA. It carries out the reaction 1-(9Z-octadecenoyl)-sn-glycero-3-phospho-(1D-myo-inositol) + (5Z,8Z,11Z,14Z)-eicosatetraenoyl-CoA = 1-(9Z-octadecenoyl)-2-(5Z,8Z,11Z,14Z-eicosatetraenoyl)-sn-glycero-3-phospho-1D-myo-inositol + CoA. The catalysed reaction is 1-(9Z-octadecenoyl)-sn-glycero-3-phospho-L-serine + (5Z,8Z,11Z,14Z)-eicosatetraenoyl-CoA = 1-(9Z-octadecenoyl)-2-(5Z,8Z,11Z,14Z-eicosatetraenoyl)-sn-glycero-3-phospho-L-serine + CoA. The enzyme catalyses 1-hexadecanoyl-sn-glycero-3-phosphate + (9Z)-octadecenoyl-CoA = 1-hexadecanoyl-2-(9Z-octadecenoyl)-sn-glycero-3-phosphate + CoA. It catalyses the reaction 1-hexadecanoyl-sn-glycero-3-phosphate + (5Z,8Z,11Z,14Z)-eicosatetraenoyl-CoA = 1-hexadecanoyl-2-(5Z,8Z,11Z,14Z-eicosatetraenoyl)-sn-glycero-3-phosphate + CoA. It carries out the reaction 1-heptadecanoyl-sn-glycero-3-phosphate + (5Z,8Z,11Z,14Z)-eicosatetraenoyl-CoA = 1-heptadecanoyl-2-(5Z,8Z,11Z,14Z)-eicosatetraenoyl-sn-glycero-3-phosphate + CoA. The catalysed reaction is 1-octadecanoyl-sn-glycero-3-phosphate + (9Z)-octadecenoyl-CoA = 1-octadecanoyl-2-(9Z-octadecenoyl)-sn-glycero-3-phosphate + CoA. The enzyme catalyses 1-octadecanoyl-sn-glycero-3-phosphate + (5Z,8Z,11Z,14Z)-eicosatetraenoyl-CoA = 1-octadecanoyl-2-(5Z,8Z,11Z,14Z-eicosatetraenoyl)-sn-glycero-3-phosphate + CoA. It catalyses the reaction 1-(9Z-octadecenoyl)-sn-glycero-3-phosphate + hexadecanoyl-CoA = 1-hexadecanoyl-2-(9Z-octadecenoyl)-sn-glycero-3-phosphate + CoA. It carries out the reaction 1-O-(9Z-octadecenyl)-sn-glycero-3-phosphate + (5Z,8Z,11Z,14Z)-eicosatetraenoyl-CoA = 1-O-(9Z-octadecenyl)-2-(5Z,8Z,11Z,14Z-eicosatetraenoyl)-sn-glycero-3-phosphate + CoA. The catalysed reaction is a 1-acyl-sn-glycero-3-phospho-(1D-myo-inositol) + (5Z,8Z,11Z,14Z)-eicosatetraenoyl-CoA = a 1-acyl-2-(5Z,8Z,11Z,14Z-eicosatetraenoyl)-sn-glycero-3-phospho-(1D-myo-inositol) + CoA. It functions in the pathway phospholipid metabolism; CDP-diacylglycerol biosynthesis; CDP-diacylglycerol from sn-glycerol 3-phosphate: step 2/3. In males, activity increases in an age-dependent fashion, maybe derived from the induction by sex-hormones. Its function is as follows. Converts 1-acyl-sn-glycerol-3-phosphate (lysophosphatidic acid or LPA) into 1,2-diacyl-sn-glycerol-3-phosphate (phosphatidic acid or PA) by incorporating an acyl moiety at the sn-2 position of the glycerol backbone. Acts on LPA containing saturated or unsaturated fatty acids C16:0-C20:4 at the sn-1 position using C18:1, C20:4 or C18:2-CoA as the acyl donor. Also acts on lysophosphatidylcholine, lysophosphatidylinositol and lysophosphatidylserine using C18:1 or C20:4-CoA. Has a preference for arachidonoyl-CoA as a donor. Also has a modest lysophosphatidylinositol acyltransferase (LPIAT) activity, converts lysophosphatidylinositol (LPI) into phosphatidylinositol. In Mus musculus (Mouse), this protein is 1-acyl-sn-glycerol-3-phosphate acyltransferase gamma.